We begin with the raw amino-acid sequence, 148 residues long: Large ribosomal subunit protein bL9 (148 aa).

Belongs to the bacterial ribosomal protein bL9 family.

Its function is as follows. Binds to the 23S rRNA. The polypeptide is Large ribosomal subunit protein bL9 (Coprothermobacter proteolyticus (strain ATCC 35245 / DSM 5265 / OCM 4 / BT)).